The sequence spans 582 residues: Adenine deaminase (582 aa).

Belongs to the metallo-dependent hydrolases superfamily. Adenine deaminase family. Mn(2+) is required as a cofactor.

The enzyme catalyses adenine + H2O + H(+) = hypoxanthine + NH4(+). The polypeptide is Adenine deaminase (Oceanobacillus iheyensis (strain DSM 14371 / CIP 107618 / JCM 11309 / KCTC 3954 / HTE831)).